Here is a 77-residue protein sequence, read N- to C-terminus: MADFEKVKSIIVEQLGVDESEVTPEAHFIDDLGADSLDTVELVMALEEEFGIEISDEDAEKIQTVGDVTKFIDNLKS.

Residues 1–76 enclose the Carrier domain; sequence MADFEKVKSI…DVTKFIDNLK (76 aa). The residue at position 36 (serine 36) is an O-(pantetheine 4'-phosphoryl)serine.

Belongs to the acyl carrier protein (ACP) family. In terms of processing, 4'-phosphopantetheine is transferred from CoA to a specific serine of apo-ACP by AcpS. This modification is essential for activity because fatty acids are bound in thioester linkage to the sulfhydryl of the prosthetic group.

It localises to the cytoplasm. It functions in the pathway lipid metabolism; fatty acid biosynthesis. Carrier of the growing fatty acid chain in fatty acid biosynthesis. This chain is Acyl carrier protein, found in Leptospira borgpetersenii serovar Hardjo-bovis (strain JB197).